The chain runs to 167 residues: Phosphopantetheine adenylyltransferase (167 aa).

Ser8 serves as a coordination point for substrate. ATP-binding positions include 8–9 (SF) and His16. 3 residues coordinate substrate: Lys40, Leu74, and Arg88. Residues 89-91 (GLR), Glu99, and 123-129 (WSFVSSS) contribute to the ATP site.

The protein belongs to the bacterial CoaD family. In terms of assembly, homohexamer. Requires Mg(2+) as cofactor.

It localises to the cytoplasm. The enzyme catalyses (R)-4'-phosphopantetheine + ATP + H(+) = 3'-dephospho-CoA + diphosphate. The protein operates within cofactor biosynthesis; coenzyme A biosynthesis; CoA from (R)-pantothenate: step 4/5. Its function is as follows. Reversibly transfers an adenylyl group from ATP to 4'-phosphopantetheine, yielding dephospho-CoA (dPCoA) and pyrophosphate. The protein is Phosphopantetheine adenylyltransferase of Deinococcus radiodurans (strain ATCC 13939 / DSM 20539 / JCM 16871 / CCUG 27074 / LMG 4051 / NBRC 15346 / NCIMB 9279 / VKM B-1422 / R1).